Consider the following 88-residue polypeptide: Phosphocarrier protein HPr (88 aa).

An HPr domain is found at 1-88 (MASKEFHIVA…ETMTKEGLAE (88 aa)). Histidine 15 functions as the Pros-phosphohistidine intermediate in the catalytic mechanism. At serine 46 the chain carries Phosphoserine; by HPrK/P.

It belongs to the HPr family.

The protein localises to the cytoplasm. With respect to regulation, phosphorylation on Ser-46 inhibits the phosphoryl transfer from enzyme I to HPr. General (non sugar-specific) component of the phosphoenolpyruvate-dependent sugar phosphotransferase system (sugar PTS). This major carbohydrate active-transport system catalyzes the phosphorylation of incoming sugar substrates concomitantly with their translocation across the cell membrane. The phosphoryl group from phosphoenolpyruvate (PEP) is transferred to the phosphoryl carrier protein HPr by enzyme I. Phospho-HPr then transfers it to the PTS EIIA domain. Its function is as follows. P-Ser-HPr interacts with the catabolite control protein A (CcpA), forming a complex that binds to DNA at the catabolite response elements cre, operator sites preceding a large number of catabolite-regulated genes. Thus, P-Ser-HPr is a corepressor in carbon catabolite repression (CCR), a mechanism that allows bacteria to coordinate and optimize the utilization of available carbon sources. P-Ser-HPr also plays a role in inducer exclusion, in which it probably interacts with several non-PTS permeases and inhibits their transport activity. The protein is Phosphocarrier protein HPr (ptsH) of Lactococcus lactis subsp. cremoris (Streptococcus cremoris).